Consider the following 273-residue polypeptide: Rhamnulose-1-phosphate aldolase (273 aa).

Residue Glu-117 is part of the active site. Zn(2+) is bound by residues His-140, His-142, and His-211.

It belongs to the aldolase class II family. RhaD subfamily. The cofactor is Zn(2+).

Its subcellular location is the cytoplasm. The catalysed reaction is L-rhamnulose 1-phosphate = (S)-lactaldehyde + dihydroxyacetone phosphate. It participates in carbohydrate degradation; L-rhamnose degradation; glycerone phosphate from L-rhamnose: step 3/3. Functionally, catalyzes the reversible cleavage of L-rhamnulose-1-phosphate to dihydroxyacetone phosphate (DHAP) and L-lactaldehyde. The polypeptide is Rhamnulose-1-phosphate aldolase (Listeria monocytogenes serotype 4a (strain HCC23)).